A 98-amino-acid polypeptide reads, in one-letter code: Large ribosomal subunit protein bL27 (98 aa).

A propeptide spanning residues 1-13 (MKKIWFHLDLQFF) is cleaved from the precursor.

It belongs to the bacterial ribosomal protein bL27 family. In terms of processing, the N-terminus is cleaved by ribosomal processing cysteine protease Prp.

This Mycoplasmoides gallisepticum (strain R(low / passage 15 / clone 2)) (Mycoplasma gallisepticum) protein is Large ribosomal subunit protein bL27.